We begin with the raw amino-acid sequence, 352 residues long: Glycerol-3-phosphate dehydrogenase [NAD(P)+] (352 aa).

Residues S11, W12, R32, and K105 each coordinate NADPH. Sn-glycerol 3-phosphate is bound by residues K105, G133, and S135. NADPH is bound at residue A137. Sn-glycerol 3-phosphate contacts are provided by K188, D241, S251, R252, and N253. The Proton acceptor role is filled by K188. Residue R252 coordinates NADPH. 2 residues coordinate NADPH: V276 and E278.

This sequence belongs to the NAD-dependent glycerol-3-phosphate dehydrogenase family.

The protein localises to the cytoplasm. It carries out the reaction sn-glycerol 3-phosphate + NAD(+) = dihydroxyacetone phosphate + NADH + H(+). The catalysed reaction is sn-glycerol 3-phosphate + NADP(+) = dihydroxyacetone phosphate + NADPH + H(+). The protein operates within membrane lipid metabolism; glycerophospholipid metabolism. In terms of biological role, catalyzes the reduction of the glycolytic intermediate dihydroxyacetone phosphate (DHAP) to sn-glycerol 3-phosphate (G3P), the key precursor for phospholipid synthesis. This is Glycerol-3-phosphate dehydrogenase [NAD(P)+] from Desulfitobacterium hafniense (strain Y51).